Reading from the N-terminus, the 327-residue chain is Undecaprenyl-phosphate 4-deoxy-4-formamido-L-arabinose transferase (327 aa).

2 helical membrane passes run 236-256 and 270-290; these read LSIF…LLVV and VFML…GMGL.

It belongs to the glycosyltransferase 2 family.

It is found in the cell inner membrane. The enzyme catalyses UDP-4-deoxy-4-formamido-beta-L-arabinose + di-trans,octa-cis-undecaprenyl phosphate = 4-deoxy-4-formamido-alpha-L-arabinopyranosyl di-trans,octa-cis-undecaprenyl phosphate + UDP. It functions in the pathway glycolipid biosynthesis; 4-amino-4-deoxy-alpha-L-arabinose undecaprenyl phosphate biosynthesis; 4-amino-4-deoxy-alpha-L-arabinose undecaprenyl phosphate from UDP-4-deoxy-4-formamido-beta-L-arabinose and undecaprenyl phosphate: step 1/2. Its pathway is bacterial outer membrane biogenesis; lipopolysaccharide biosynthesis. Functionally, catalyzes the transfer of 4-deoxy-4-formamido-L-arabinose from UDP to undecaprenyl phosphate. The modified arabinose is attached to lipid A and is required for resistance to polymyxin and cationic antimicrobial peptides. This Klebsiella pneumoniae (strain 342) protein is Undecaprenyl-phosphate 4-deoxy-4-formamido-L-arabinose transferase.